Here is a 178-residue protein sequence, read N- to C-terminus: MELMGSSYDGDYNNGRMEGTGEYTIPTHTRYVGEMKDGMFHGKGVLHFPNGSKYEGTWEKGICKEGKYTFSDGLKYKETDWDYCDGKDRRFYSERCNGLKPAGESQLTDPDPPRVIPDGCYDTGDGFYDPNTRVVKGYDGNFLRNADDQEHEWIVLSCRKSLDEFTGYCPRASTLEEK.

MORN repeat units follow at residues 8-30 (YDGDYNNGRMEGTGEYTIPTHTR), 31-53 (YVGEMKDGMFHGKGVLHFPNGSK), and 54-75 (YEGTWEKGICKEGKYTFSDGLK).

The protein localises to the cell projection. Its subcellular location is the cilium. It is found in the flagellum. The polypeptide is MORN repeat-containing protein 5 (morn5) (Danio rerio (Zebrafish)).